The following is a 355-amino-acid chain: Uroporphyrinogen decarboxylase (355 aa).

Residues 27 to 31, Asp77, Tyr154, Thr209, and His327 each bind substrate; that span reads RQAGR.

It belongs to the uroporphyrinogen decarboxylase family. Homodimer.

It is found in the cytoplasm. The enzyme catalyses uroporphyrinogen III + 4 H(+) = coproporphyrinogen III + 4 CO2. It functions in the pathway porphyrin-containing compound metabolism; protoporphyrin-IX biosynthesis; coproporphyrinogen-III from 5-aminolevulinate: step 4/4. Functionally, catalyzes the decarboxylation of four acetate groups of uroporphyrinogen-III to yield coproporphyrinogen-III. The polypeptide is Uroporphyrinogen decarboxylase (Aeromonas salmonicida (strain A449)).